The chain runs to 279 residues: Undecaprenyl-diphosphatase (279 aa).

6 consecutive transmembrane segments (helical) span residues 45–65 (FVEM…IVIY), 85–105 (WQLW…ALPF), 113–133 (FNFM…FIWV), 188–208 (SVAA…YSGL), 226–246 (LILL…IRFL), and 255–275 (FTIF…YWLV).

It belongs to the UppP family.

It localises to the cell membrane. It catalyses the reaction di-trans,octa-cis-undecaprenyl diphosphate + H2O = di-trans,octa-cis-undecaprenyl phosphate + phosphate + H(+). In terms of biological role, catalyzes the dephosphorylation of undecaprenyl diphosphate (UPP). Confers resistance to bacitracin. The chain is Undecaprenyl-diphosphatase from Streptococcus agalactiae serotype III (strain NEM316).